The sequence spans 203 residues: RNA pyrophosphohydrolase (203 aa).

The 144-residue stretch at 6-149 folds into the Nudix hydrolase domain; it reads GFRPNVGIIL…KRNVYQMALT (144 aa). A Nudix box motif is present at residues 38-59; sequence GGIKHGESPEQAMFRELHEEVG. The tract at residues 170–203 is disordered; sequence RAHRRDEGSEHNDHLDPTGPHDAGASVSEPKQAE. Positions 173–185 are enriched in basic and acidic residues; it reads RRDEGSEHNDHLD.

This sequence belongs to the Nudix hydrolase family. RppH subfamily. A divalent metal cation serves as cofactor.

In terms of biological role, accelerates the degradation of transcripts by removing pyrophosphate from the 5'-end of triphosphorylated RNA, leading to a more labile monophosphorylated state that can stimulate subsequent ribonuclease cleavage. This Leptothrix cholodnii (strain ATCC 51168 / LMG 8142 / SP-6) (Leptothrix discophora (strain SP-6)) protein is RNA pyrophosphohydrolase.